The following is a 944-amino-acid chain: Protein unc-45 homolog A (944 aa).

The tract at residues 1–25 (MTVSGPGTPEPRPSDPGASSAEELR) is disordered. TPR repeat units lie at residues 21–54 (AEEL…GATP), 58–91 (AILH…DGGD), and 92–125 (VKAL…EPKN). Lysine 70 bears the N6-acetyllysine mark. The residue at position 483 (lysine 483) is an N6-acetyllysine.

In terms of assembly, interacts with PGR isoforms A and B as well as with NR3C1 in the absence of ligand, and with HSP90AB1. Binding to HSP90AB1 involves 2 UNC45A monomers per HSP90AB1 dimer.

Its subcellular location is the cytoplasm. It is found in the perinuclear region. It localises to the nucleus. In terms of biological role, may act as co-chaperone for HSP90 (Potential). Prevents the stimulation of HSP90AB1 ATPase activity by AHSA1. Positive factor in promoting PGR function in the cell. May be necessary for proper folding of myosin (Potential). Necessary for normal cell proliferation. Necessary for normal myotube formation and myosin accumulation during muscle cell development. May play a role in erythropoiesis in stroma cells in the spleen. This is Protein unc-45 homolog A (Unc45a) from Rattus norvegicus (Rat).